Consider the following 995-residue polypeptide: Secreted protein CSS1 (995 aa).

Residues 1-23 (MFNRLNKFQAALALALYSQSALG) form the signal peptide. Residues 26–253 (YSNSTSISSN…GVSSSGSQSV (228 aa)) form the Methyl-accepting transducer domain. Asparagine 28 and asparagine 35 each carry an N-linked (GlcNAc...) asparagine glycan. A disordered region spans residues 98–276 (SSSSVSDVSS…TSSASTASGS (179 aa)). 2 N-linked (GlcNAc...) asparagine glycosylation sites follow: asparagine 468 and asparagine 664.

The protein belongs to the SRP1/TIP1 family.

Its subcellular location is the secreted. In terms of biological role, secreted protein that may be involved in cell wall organization and biosynthesis. The sequence is that of Secreted protein CSS1 from Saccharomyces cerevisiae (strain ATCC 204508 / S288c) (Baker's yeast).